The chain runs to 491 residues: Aspartyl/glutamyl-tRNA(Asn/Gln) amidotransferase subunit B (491 aa).

Belongs to the GatB/GatE family. GatB subfamily. In terms of assembly, heterotrimer of A, B and C subunits.

It catalyses the reaction L-glutamyl-tRNA(Gln) + L-glutamine + ATP + H2O = L-glutaminyl-tRNA(Gln) + L-glutamate + ADP + phosphate + H(+). The enzyme catalyses L-aspartyl-tRNA(Asn) + L-glutamine + ATP + H2O = L-asparaginyl-tRNA(Asn) + L-glutamate + ADP + phosphate + 2 H(+). Its function is as follows. Allows the formation of correctly charged Asn-tRNA(Asn) or Gln-tRNA(Gln) through the transamidation of misacylated Asp-tRNA(Asn) or Glu-tRNA(Gln) in organisms which lack either or both of asparaginyl-tRNA or glutaminyl-tRNA synthetases. The reaction takes place in the presence of glutamine and ATP through an activated phospho-Asp-tRNA(Asn) or phospho-Glu-tRNA(Gln). The protein is Aspartyl/glutamyl-tRNA(Asn/Gln) amidotransferase subunit B of Burkholderia cenocepacia (strain ATCC BAA-245 / DSM 16553 / LMG 16656 / NCTC 13227 / J2315 / CF5610) (Burkholderia cepacia (strain J2315)).